Reading from the N-terminus, the 531-residue chain is Probable protein phosphatase 2C 66 (531 aa).

Residues Met1–Gly47 form a disordered region. Over residues Pro10–Gln25 the composition is skewed to low complexity. Residues Ala88–Leu401 enclose the PPM-type phosphatase domain. Positions 123 and 124 each coordinate Mn(2+). Positions Ser151–Glu172 are enriched in polar residues. Residues Ser151 to Val176 are disordered. 2 residues coordinate Mn(2+): Asp346 and Asp392.

This sequence belongs to the PP2C family. It depends on Mg(2+) as a cofactor. Mn(2+) is required as a cofactor.

The enzyme catalyses O-phospho-L-seryl-[protein] + H2O = L-seryl-[protein] + phosphate. It catalyses the reaction O-phospho-L-threonyl-[protein] + H2O = L-threonyl-[protein] + phosphate. The protein is Probable protein phosphatase 2C 66 of Oryza sativa subsp. japonica (Rice).